The chain runs to 300 residues: Ubiquinone biosynthesis protein COQ4, mitochondrial (300 aa).

Residues His173, Asp174, His177, and Glu189 each coordinate Zn(2+).

This sequence belongs to the COQ4 family. Component of a multi-subunit COQ enzyme complex, composed of at least COQ3, COQ4, COQ5, COQ6, COQ7 and COQ9. Requires Zn(2+) as cofactor.

It localises to the mitochondrion inner membrane. The enzyme catalyses a 4-hydroxy-3-methoxy-5-(all-trans-polyprenyl)benzoate + H(+) = a 2-methoxy-6-(all-trans-polyprenyl)phenol + CO2. The protein operates within cofactor biosynthesis; ubiquinone biosynthesis. Its function is as follows. Lyase that catalyzes the C1-decarboxylation of 4-hydroxy-3-methoxy-5-(all-trans-polyprenyl)benzoic acid into 2-methoxy-6-(all-trans-polyprenyl)phenol during ubiquinone biosynthesis. In Cryptococcus neoformans var. neoformans serotype D (strain JEC21 / ATCC MYA-565) (Filobasidiella neoformans), this protein is Ubiquinone biosynthesis protein COQ4, mitochondrial.